A 287-amino-acid polypeptide reads, in one-letter code: MELYETSPYFYQEPHFYDGENYLPVHLQGFEPPGYERTELSLSPEARGPLEEKGLGTPEHCPGQCLPWACKVCKRKSVSVDRRRAATLREKRRLKKVNEAFEALKRSTLLNPNQRLPKVEILRSAIQYIERLQALLSSLNQEERDLRYRGGGGPSRWYPVNATPTAPPAVRSGAMHWSLVPTQEIICSQLTLQVPTTCTPLRPSWTASRWRICLSPSQMKPCPTEIVCQAGCAWEPLSWCQTPPLLQQGPFKWGCPGAQKTALGCHKPDYPPSIHIRLTPSPAREFN.

Phosphoserine; by CaMK2G is present on residues Ser77 and Ser79. In terms of domain architecture, bHLH spans 81-132 (DRRRAATLREKRRLKKVNEAFEALKRSTLLNPNQRLPKVEILRSAIQYIERL). Position 87 is a phosphothreonine; by CaMK2G (Thr87).

In terms of assembly, homodimer and heterodimer with E12; heterodimerization enhances MYOG DNA-binding and transcriptional activities. Interacts with SMARCA4/BRG1/BAF190A. Interacts (via C-terminal region) with SSRP1 and SUPT16H; the interaction is indicative of an interaction with the FACT complex. Interacts with CSRP3. Post-translationally, phosphorylated by CAMK2G on threonine and serine amino acids in a muscle activity-dependent manner. Phosphorylation of Thr-87 impairs both DNA-binding and trans-activation functions in contracting muscles. As to expression, expressed in muscle (at protein level).

Its subcellular location is the nucleus. Acts as a transcriptional activator that promotes transcription of muscle-specific target genes and plays a role in muscle differentiation, cell cycle exit and muscle atrophy. Essential for the development of functional embryonic skeletal fiber muscle differentiation. However is dispensable for postnatal skeletal muscle growth; phosphorylation by CAMK2G inhibits its transcriptional activity in respons to muscle activity. Required for the recruitment of the FACT complex to muscle-specific promoter regions, thus promoting gene expression initiation. During terminal myoblast differentiation, plays a role as a strong activator of transcription at loci with an open chromatin structure previously initiated by MYOD1. Together with MYF5 and MYOD1, co-occupies muscle-specific gene promoter core regions during myogenesis. Also cooperates with myocyte-specific enhancer factor MEF2D and BRG1-dependent recruitment of SWI/SNF chromatin-remodeling enzymes to alter chromatin structure at myogenic late gene promoters. Facilitates cell cycle exit during terminal muscle differentiation through the up-regulation of miR-20a expression, which in turn represses genes involved in cell cycle progression. Binds to the E-box containing (E1) promoter region of the miR-20a gene. Also plays a role in preventing reversal of muscle cell differentiation. Contributes to the atrophy-related gene expression in adult denervated muscles. Induces fibroblasts to differentiate into myoblasts. The protein is Myogenin (Myog) of Rattus norvegicus (Rat).